Consider the following 343-residue polypeptide: Galactoside alpha-(1,2)-fucosyltransferase 2 (343 aa).

Residues 1-14 (MLVVQMPFSFPMAH) are Cytoplasmic-facing. The helical; Signal-anchor for type II membrane protein transmembrane segment at 15-28 (FILFVFTVSTIFHV) threads the bilayer. At 29-343 (QQRLAKIQAM…AADLSPLLKH (315 aa)) the chain is on the lumenal side. Asn188, Asn282, and Asn308 each carry an N-linked (GlcNAc...) asparagine glycan.

Belongs to the glycosyltransferase 11 family.

It localises to the golgi apparatus. The protein resides in the golgi stack membrane. The catalysed reaction is a beta-D-galactosyl-(1-&gt;3)-N-acetyl-beta-D-glucosaminyl derivative + GDP-beta-L-fucose = an alpha-L-Fuc-(1-&gt;2)-beta-D-Gal-(1-&gt;3)-beta-D-GlcNAc derivative + GDP + H(+). It catalyses the reaction a beta-D-galactosyl-(1-&gt;4)-N-acetyl-beta-D-glucosaminyl derivative + GDP-beta-L-fucose = an alpha-L-Fuc-(1-&gt;2)-beta-D-Gal-(1-&gt;4)-beta-D-GlcNAc derivative + GDP + H(+). It carries out the reaction a neolactoside nLc4Cer + GDP-beta-L-fucose = a neolactoside IV(2)-alpha-Fuc-nLc4Cer + GDP + H(+). The enzyme catalyses a neolactoside nLc4Cer(d18:1(4E)) + GDP-beta-L-fucose = a neolactoside IV(2)-alpha-Fuc-nLc4Cer(d18:1(4E)) + GDP + H(+). The catalysed reaction is a ganglioside GM1 + GDP-beta-L-fucose = a ganglioside Fuc-GM1 + GDP + H(+). It catalyses the reaction a ganglioside GA1 + GDP-beta-L-fucose = a ganglioside Fuc-GA1 + GDP + H(+). It carries out the reaction Lc4Cer + GDP-beta-L-fucose = alpha-L-fucosyl-(1-&gt;2)-beta-D-galactosyl-(1-&gt;3)-N-acetyl-beta-D-glucosaminyl-(1-&gt;3)-beta-D-galactosyl-(1-&gt;4)-beta-D-glucosyl-(1&lt;-&gt;1')-ceramide + GDP + H(+). The enzyme catalyses a beta-D-Gal-(1-&gt;3)-beta-D-GlcNAc-(1-&gt;3)-beta-D-Gal-(1-&gt;4)-beta-D-Glc-(1&lt;-&gt;1')-Cer(d18:1(4E)) + GDP-beta-L-fucose = alpha-L-fucosyl-(1-&gt;2)- beta-D-galactosyl-(1-&gt;3)-N-acetyl-beta-D-glucosaminyl-(1-&gt;3)-beta-D-galactosyl-(1-&gt;4)-beta-D-glucosyl-(1&lt;-&gt;1')-N-acylsphing-4-enine + GDP + H(+). The catalysed reaction is a ganglioside GD1b + GDP-beta-L-fucose = a ganglioside Fuc-GD1b + GDP + H(+). It catalyses the reaction a ganglioside GM1 (d18:1(4E)) + GDP-beta-L-fucose = a ganglioside Fuc-GM1 (d18:1(4E)) + GDP + H(+). It carries out the reaction a globoside GalGb4Cer (d18:1(4E)) + GDP-beta-L-fucose = a globoside Globo-H (d18:1(4E)) + GDP + H(+). The enzyme catalyses a lactoside III(4)-a-Fuc-Lc4Cer + GDP-beta-L-fucose = a lactoside IV(2),III(4)-a-[Fuc]2-Lc4Cer + GDP + H(+). The catalysed reaction is beta-D-galactosyl-(1-&gt;3)-N-acetyl-D-galactosamine + GDP-beta-L-fucose = alpha-L-fucosyl-(1-&gt;2)-beta-D-galactosyl-(1-&gt;3)-N-acetyl-D-galactosamine + GDP + H(+). Its pathway is protein modification; protein glycosylation. Functionally, catalyzes the transfer of L-fucose, from a guanosine diphosphate-beta-L-fucose, to the terminal galactose on both O- and N-linked glycans chains of cell surface glycoproteins and glycolipids and the resulting epitope regulates several processes such as cell-cell interaction including host-microbe interaction, cell surface expression and cell proliferation. Preferentially fucosylates gangliosides GA1 and GM1 in the antrum, cecum and colon and in the female reproductive organs. Fucosylated host glycoproteins or glycolipids mediate interaction with intestinal microbiota influencing its composition. Creates a soluble precursor oligosaccharide FuC-alpha ((1,2)Galbeta-) called the H antigen which is an essential substrate for the final step in the soluble ABO blood group antigen synthesis pathway. In Hylobates lar (Lar gibbon), this protein is Galactoside alpha-(1,2)-fucosyltransferase 2.